A 707-amino-acid polypeptide reads, in one-letter code: Acyl-CoA ligase 891, peroxisomal (707 aa).

An ATP-binding site is contributed by 259 to 270 (INYTSGTTGPPK). Residues 525–549 (DGWFRTGDVCTVDAQGRFIIIDRRK) form a fatty acid-binding region. Residues 705–707 (AKL) carry the Peroxisome targeting signal motif.

The protein belongs to the ATP-dependent AMP-binding enzyme family.

It localises to the peroxisome matrix. The catalysed reaction is (4E,8E)-10-(4-hydroxy-6-methoxy-7-methyl-3-oxo-1,3-dihydro-2-benzofuran-5-yl)-4,8-dimethyldeca-4,8-dienoate + ATP + CoA = (4E,8E)-10-(4-hydroxy-6-methoxy-7-methyl-3-oxo-1,3-dihydro-2-benzofuran-5-yl)-4,8-dimethyldeca-4,8-dienoyl-CoA + AMP + diphosphate. The protein operates within secondary metabolite biosynthesis; terpenoid biosynthesis. In terms of biological role, acyl-CoA ligase involved in the biosynthesis of mycophenolic acid (MPA), the first isolated antibiotic natural product in the world obtained from a culture of Penicillium brevicompactum in 1893. The peroxisomal acyl-CoA ligase 891 converts the intermediate MFDHMP-3C into MFDHMP-3C-CoA which impairs its diffusion from the peroxisome. The first step of the pathway is the synthesis of 5-methylorsellinic acid (5MOA) by the cytosolic polyketide synthase mpaC. 5MOA is then converted to the phthalide compound 5,7-dihydroxy-4,6-dimethylphthalide (DHMP) by the endoplasmic reticulum-bound cytochrome P450 monooxygenase mpaDE. MpaDE first catalyzes hydroxylation of 5-MOA to 4,6-dihydroxy-2-(hydroxymethyl)-3-methylbenzoic acid (DHMB). MpaDE then acts as a lactone synthase that catalyzes the ring closure to convert DHMB into DHMP. The next step is the prenylation of DHMP by the Golgi apparatus-associated prenyltransferase mpaA to yield farnesyl-DHMP (FDHMP). The ER-bound oxygenase mpaB then mediates the oxidative cleavage the C19-C20 double bond in FDHMP to yield FDHMP-3C via a mycophenolic aldehyde intermediate. The O-methyltransferase mpaG catalyzes the methylation of FDHMP-3C to yield MFDHMP-3C. After the cytosolic methylation of FDHMP-3C, MFDHMP-3C enters into peroxisomes probably via free diffusion due to its low molecular weight. Upon a peroxisomal CoA ligation reaction, catalyzed by a beta-oxidation component enzyme acyl-CoA ligase ACL891, MFDHMP-3C-CoA would then be restricted to peroxisomes for the following beta-oxidation pathway steps. The peroxisomal beta-oxidation machinery than converts MFDHMP-3C-CoA into MPA_CoA, via a beta-oxidation chain-shortening process. Finally mpaH acts as a peroxisomal acyl-CoA hydrolase with high substrate specificity toward MPA-CoA to release the final product MPA. The sequence is that of Acyl-CoA ligase 891, peroxisomal from Penicillium brevicompactum.